A 1102-amino-acid chain; its full sequence is Probable DNA-directed RNA polymerase (1102 aa).

Catalysis depends on residues Asp-734, Lys-804, and Asp-980.

Belongs to the phage and mitochondrial RNA polymerase family.

It is found in the mitochondrion. It catalyses the reaction RNA(n) + a ribonucleoside 5'-triphosphate = RNA(n+1) + diphosphate. Its function is as follows. DNA-dependent RNA polymerase catalyzes the transcription of DNA into RNA using the four ribonucleoside triphosphates as substrates. This chain is Probable DNA-directed RNA polymerase, found in Agaricus bitorquis (Pavement mushroom).